Here is a 147-residue protein sequence, read N- to C-terminus: Cyanate hydratase (147 aa).

Residues Arg-88, Glu-91, and Ser-114 contribute to the active site.

Belongs to the cyanase family.

It catalyses the reaction cyanate + hydrogencarbonate + 3 H(+) = NH4(+) + 2 CO2. Its function is as follows. Catalyzes the reaction of cyanate with bicarbonate to produce ammonia and carbon dioxide. The chain is Cyanate hydratase from Thiobacillus denitrificans (strain ATCC 25259 / T1).